We begin with the raw amino-acid sequence, 376 residues long: MVERGPTVYLSGLREKHFGELFLNAYNVSESSSATQASSSQAASSELGLSEEGLKHIARYIEYFESRYNDIWLVFHHEGVSLSKLMYTVEEAEISSEKAEEASHGQILRPSKWWTWLKTTESGKEEMRRIIWQLLLGLKACHDRNITHRDIKPENMVICLEDIKSGRCLKGVPNGDQNFKTNMRIIDFGSALDEYTIKHLYGSTGPSRAEQTHDYAPPEAILNSSWHHGPTSLTLKYDMWSVGVVMLEMILGSPNVFEISSVTRALLDQHIRGWSENFKELAYKLRSLMEMCILIPGSSLKHGGASSKQGGISLASWKCSEEFFAEQIKSRDPLKIGFPNVWALRLVRGLLQWYPEDRVTVDEALQHPYFQPPPSS.

The Protein kinase domain maps to 1 to 370 (MVERGPTVYL…VDEALQHPYF (370 aa)).

Belongs to the protein kinase superfamily. Ser/Thr protein kinase family.

The polypeptide is Probable inactive protein kinase At3g63330 (Arabidopsis thaliana (Mouse-ear cress)).